Reading from the N-terminus, the 231-residue chain is 7-cyano-7-deazaguanine synthase (231 aa).

An ATP-binding site is contributed by 8 to 18; sequence FSGGQDSTTCL. Zn(2+) contacts are provided by Cys188, Cys197, Cys200, and Cys203.

It belongs to the QueC family. The cofactor is Zn(2+).

It catalyses the reaction 7-carboxy-7-deazaguanine + NH4(+) + ATP = 7-cyano-7-deazaguanine + ADP + phosphate + H2O + H(+). Its pathway is purine metabolism; 7-cyano-7-deazaguanine biosynthesis. In terms of biological role, catalyzes the ATP-dependent conversion of 7-carboxy-7-deazaguanine (CDG) to 7-cyano-7-deazaguanine (preQ(0)). This chain is 7-cyano-7-deazaguanine synthase, found in Salmonella gallinarum (strain 287/91 / NCTC 13346).